The sequence spans 391 residues: ATP phosphoribosyltransferase regulatory subunit (391 aa).

Belongs to the class-II aminoacyl-tRNA synthetase family. HisZ subfamily. In terms of assembly, heteromultimer composed of HisG and HisZ subunits.

The protein localises to the cytoplasm. Its pathway is amino-acid biosynthesis; L-histidine biosynthesis; L-histidine from 5-phospho-alpha-D-ribose 1-diphosphate: step 1/9. In terms of biological role, required for the first step of histidine biosynthesis. May allow the feedback regulation of ATP phosphoribosyltransferase activity by histidine. The polypeptide is ATP phosphoribosyltransferase regulatory subunit (Bacillus licheniformis (strain ATCC 14580 / DSM 13 / JCM 2505 / CCUG 7422 / NBRC 12200 / NCIMB 9375 / NCTC 10341 / NRRL NRS-1264 / Gibson 46)).